The chain runs to 406 residues: Argininosuccinate synthase (406 aa).

Residues Ala-11–Ser-19 and Ala-38 contribute to the ATP site. 2 residues coordinate L-citrulline: Tyr-91 and Ser-96. Gly-121 provides a ligand contact to ATP. L-aspartate-binding residues include Thr-123, Asn-127, and Asp-128. Asn-127 serves as a coordination point for L-citrulline. The L-citrulline site is built by Arg-131, Ser-181, Ser-190, Glu-266, and Tyr-278.

This sequence belongs to the argininosuccinate synthase family. Type 1 subfamily. Homotetramer.

Its subcellular location is the cytoplasm. The enzyme catalyses L-citrulline + L-aspartate + ATP = 2-(N(omega)-L-arginino)succinate + AMP + diphosphate + H(+). Its pathway is amino-acid biosynthesis; L-arginine biosynthesis; L-arginine from L-ornithine and carbamoyl phosphate: step 2/3. This chain is Argininosuccinate synthase, found in Campylobacter jejuni subsp. jejuni serotype O:23/36 (strain 81-176).